The following is a 151-amino-acid chain: Ribosome maturation factor RimP (151 aa).

The protein belongs to the RimP family.

It is found in the cytoplasm. Required for maturation of 30S ribosomal subunits. The chain is Ribosome maturation factor RimP from Halorhodospira halophila (strain DSM 244 / SL1) (Ectothiorhodospira halophila (strain DSM 244 / SL1)).